Consider the following 443-residue polypeptide: Nitrate/nitrite binding protein NrtA (443 aa).

An N-terminal signal peptide occupies residues 1-25 (MSQFSRRKFLLTAGGTAAAALWLNA). A lipid anchor (N-palmitoyl cysteine) is attached at C26. The S-diacylglycerol cysteine moiety is linked to residue C26. Residues 31 to 46 (SSTDTTGSTSTPAPSG) are compositionally biased toward low complexity. A disordered region spans residues 31–52 (SSTDTTGSTSTPAPSGTSGGDA). W96, Q150, H195, G239, and K268 together coordinate nitrate.

This sequence belongs to the CmpA/NrtA family. In terms of assembly, the complex is composed of two ATP-binding proteins (NrtC and NrtD), two transmembrane proteins (NrtB) and a solute-binding protein (NrtA). NrtA can form homotrimers. Post-translationally, the N-terminus is blocked.

The protein resides in the cell inner membrane. In terms of biological role, part of the ABC transporter complex NrtABCD involved in nitrate uptake. The complex is probably also involved in nitrite transport. NrtA is the substrate-binding protein. Binds both nitrate and nitrite with high affinity. This Synechococcus elongatus (strain ATCC 33912 / PCC 7942 / FACHB-805) (Anacystis nidulans R2) protein is Nitrate/nitrite binding protein NrtA.